We begin with the raw amino-acid sequence, 486 residues long: Serine/threonine-protein phosphatase 2A 56 kDa regulatory subunit alpha isoform (486 aa).

The residue at position 2 (Ser2) is an N-acetylserine. The segment at 22–52 (DGFTRKSVRKAQRQKRSQGSSQFRSQGSQAE) is disordered. Residues 27–37 (KSVRKAQRQKR) are compositionally biased toward basic residues. Residues 38 to 51 (SQGSSQFRSQGSQA) show a composition bias toward low complexity. Residues Ser41, Ser42, and Ser49 each carry the phosphoserine modification.

Belongs to the phosphatase 2A regulatory subunit B56 family. In terms of assembly, PP2A consists of a common heterodimeric core enzyme, composed of a 36 kDa catalytic subunit (subunit C) and a 65 kDa constant regulatory subunit (PR65 or subunit A), that associates with a variety of regulatory subunits. Proteins that associate with the core dimer include three families of regulatory subunits B (the R2/B/PR55/B55, R3/B''/PR72/PR130/PR59 and R5/B'/B56 families), the 48 kDa variable regulatory subunit, viral proteins, and cell signaling molecules. Interacts with SGO1. In terms of tissue distribution, widely expressed with highest levels in thymus and ovary.

It is found in the cytoplasm. Its subcellular location is the nucleus. The protein resides in the chromosome. The protein localises to the centromere. The B regulatory subunit might modulate substrate selectivity and catalytic activity, and might also direct the localization of the catalytic enzyme to a particular subcellular compartment. In Mus musculus (Mouse), this protein is Serine/threonine-protein phosphatase 2A 56 kDa regulatory subunit alpha isoform (Ppp2r5a).